The chain runs to 135 residues: Large ribosomal subunit protein eL32 (135 aa).

Belongs to the eukaryotic ribosomal protein eL32 family.

This is Large ribosomal subunit protein eL32 from Methanococcus maripaludis (strain C5 / ATCC BAA-1333).